The following is a 504-amino-acid chain: Maturase K (504 aa).

This sequence belongs to the intron maturase 2 family. MatK subfamily.

The protein localises to the plastid. The protein resides in the chloroplast. Functionally, usually encoded in the trnK tRNA gene intron. Probably assists in splicing its own and other chloroplast group II introns. The chain is Maturase K from Betula papyrifera (Paper birch).